A 287-amino-acid chain; its full sequence is Ribonuclease Z (287 aa).

7 residues coordinate Zn(2+): histidine 64, histidine 66, aspartate 68, histidine 69, histidine 124, aspartate 191, and histidine 250. Aspartate 68 serves as the catalytic Proton acceptor.

It belongs to the RNase Z family. Homodimer. Requires Zn(2+) as cofactor.

The catalysed reaction is Endonucleolytic cleavage of RNA, removing extra 3' nucleotides from tRNA precursor, generating 3' termini of tRNAs. A 3'-hydroxy group is left at the tRNA terminus and a 5'-phosphoryl group is left at the trailer molecule.. Zinc phosphodiesterase, which displays some tRNA 3'-processing endonuclease activity. Probably involved in tRNA maturation, by removing a 3'-trailer from precursor tRNA. The polypeptide is Ribonuclease Z (Pyrobaculum aerophilum (strain ATCC 51768 / DSM 7523 / JCM 9630 / CIP 104966 / NBRC 100827 / IM2)).